Here is a 1640-residue protein sequence, read N- to C-terminus: MAAEASSTGLASCHLVESKSGAQGASGCQCTRCGRKVSVASGDHHKFPCGHAFCELCLLAPQEYTTSKCTDCEVHTTVSMNQGHYPVDGFIEEDSSLEALPPKMVNNCSSDLEKTVDQLINDLEHSSSIHRNVSNPSAVMSETEEIDEALKIAGCNFEQLSNAIKMLDSTQDQTRQETHSLTEAVEKQFDTLLASLDSRKKSLCEELIRRTDDYLSKLVTVKSYIEEKKSDLDAAMKIAKELRSAPSLRTYCDLTQIIRTLKLTFESELSQVSSIIPRNTPRLDINCSEAICMFSSMGKIEFEDSTKCYPQENEDGQNVQKKFNNRKELCCDVYSSLEKKKVDAAVLTDETPEPPLQAEAPDRHLEGKKKQPTKEMVVVTSPKTIAVLPQLGSSPDVIIEEIIEENLESCFTDDPIETSGYPKKPPQKEQSAPVGSKAGCPELVFVSHVIHPCHFYVRKYSQIKDATILEKKMKQVCNRSLHLDPSDILELGARIFVNSIKNRMWCRGIITEIIPSKTKNIRKPCSPTKFSVCEISLIQIFMVDFGNSEVLIITGVGDTHEGPEHDGEQHITLSDFCLLLMKSEPYSEELLKDIPHLAHLCSLKDIVPYNSTEGWEKEAKVEFLKMVNKKAVLMKVFGEEDDVLIVDLQKPPTNKISSDMPVSLRDALVFMELARFRSQSPRSHSEKNTTLCYHPPILPEEMTEVSVMVCHINSPTDFYLQLMENLDFLSLLKTIEEFYKGEDGENLEILCPLQNQACVAKFEDGIWYRAKVIGLPGHREVEVKYVDFGNTAKITLKDMRKIKDEFLEPPEKAIKCKLAYVEPSKKSQWSKKAKEKFEEKTQDKFVTCSVIKILENNVLLVELFDSRAPGKSAVSINDQLVKEGLASYEAGYTLKDNSKKHLEVWDPSPEEIITSEINNLSPLSVKSLPNENFQSLYNKELPVNICNVISPEKIYVQWLLTENLLNSLEEKMVAAYEHSEWKPVKWECDMHCAVKVPAKNQWRRGQILRMVTDKLVEVLLYDVGVELVVNIHCLRELQENLKTMGRLSLECSLVDIRPTGGSDKWTATACDCLSLHLTGAIATIILQESNTTWPLPVKIFCRDEKGERVDVSKYLIKKGLALRERRVSKSSNSHSPEKSLEIPLEQGDSVVTKCFKINFDTNKKIADKVNEHKVPDSKGKKSESRSTGCYRPPAVPNTSSFEAIVTCIGDDGTIFVVPKLSEFELIKMMDEIQSNLKCLGLLEPYSWKKGEPCAVRGSDTLWYRGKVMEVVGGTIRVQYLDHGFTEKIPQCHLYPILLYPDTPQFCIPCQLYQTLPVGNTWQPDAIELLQELLSKREVDIHIMELPNNSWGKLSVHLYFDGMSLSHFMAHHKYCIFEHTEEIFKEKPRGQNKKYEDENWKIRFEDLLLPEMEAPVLPPYLSSLLPPPEELFAVQVKHIVSPDEMYICLDSEDSYTQFNHHGDTDDSGVSWESESENLEEALQRFNKNVETFPPLTDFSSEMPCLAEYADGLWYRAKIISIKEFNPLSVLVLFVDYGCTEKLTINRLRQIPVQLMQYPAQAIKVLLAGFKPPLSDSGKTRIPYCPKWSMEALWTMIDCLQGKQLYASSVAQAPEQIVTLYEDEQYPVHMSLVEMGLADKDE.

The RING-type zinc finger occupies 30–73 (CTRCGRKVSVASGDHHKFPCGHAFCELCLLAPQEYTTSKCTDCE). Serine 134 is modified (phosphoserine). Residue lysine 229 is modified to N6-acetyllysine. 2 disordered regions span residues 348–376 (TDETPEPPLQAEAPDRHLEGKKKQPTKEM) and 413–435 (DDPIETSGYPKKPPQKEQSAPVG). Residues 360–373 (APDRHLEGKKKQPT) are compositionally biased toward basic and acidic residues. 2 consecutive Tudor domains span residues 751–809 (CPLQ…FLEP) and 985–1044 (KWEC…LKTM). Basic and acidic residues predominate over residues 1170 to 1184 (NEHKVPDSKGKKSES). Residues 1170-1191 (NEHKVPDSKGKKSESRSTGCYR) form a disordered region. 2 Tudor domains span residues 1246-1303 (SWKK…PDTP) and 1496-1556 (DFSS…LMQY).

Interacts with MXD1, MXD3, MXD4, MXI1 and PIWIL1. Self-associates. As to expression, expressed at high levels in adult testis. Expressed in male germ cells (at protein level). Expressed at lower levels in adult thyroid, submaxillary gland, ovary and epididymis.

It localises to the cytoplasm. The protein localises to the nucleus. Its function is as follows. Seems to be involved in regulation of transcriptional activity of MYC. In vitro, inhibits DNA-binding activity of Mad-MAX heterodimers. Can recruit Mad transcriptional repressors (MXD1, MXD3, MXD4 and MXI1) to the cytoplasm. May be involved in spermiogenesis. In Mus musculus (Mouse), this protein is RING finger protein 17 (Rnf17).